A 268-amino-acid polypeptide reads, in one-letter code: Proliferating cell nuclear antigen (268 aa).

The DNA-binding element occupies 61–80; sequence RCDRNPSMGMNLNNMAKMLK.

It belongs to the PCNA family.

The protein localises to the nucleus. Functionally, this protein is an auxiliary protein of DNA polymerase delta and is involved in the control of eukaryotic DNA replication by increasing the polymerase's processibility during elongation of the leading strand. This Catharanthus roseus (Madagascar periwinkle) protein is Proliferating cell nuclear antigen.